We begin with the raw amino-acid sequence, 307 residues long: Putative oxidoreductase YceM (307 aa).

The protein belongs to the Gfo/Idh/MocA family.

The chain is Putative oxidoreductase YceM (yceM) from Escherichia coli (strain K12).